A 527-amino-acid polypeptide reads, in one-letter code: Importin subunit alpha (527 aa).

The 58-residue stretch at 1–58 folds into the IBB domain; it reads MSLRPNSRTEARRSRYKVAVDAEEGRRRREDNMVEIRKNKREENLLKKRREGLLQAQQ. 8 ARM repeats span residues 109–151, 152–196, 197–234, 235–279, 280–319, 320–362, 363–403, and 404–445; these read IEEV…TSEN, TKVV…YRDL, VLGH…RGKP, QPLF…DKIQ, AVIE…DDIQ, TQVM…NRNQ, IQIV…GGNH, and DQIK…KIGE.

It belongs to the importin alpha family. In terms of assembly, forms a complex with importin subunit beta-1.

It is found in the cytoplasm. Its function is as follows. Binds specifically and directly to substrates containing either a simple or bipartite NLS motif. Promotes docking of import substrates to the nuclear envelope. Seems to act as a cytosolic receptor for both simple and bipartite NLS motifs. The sequence is that of Importin subunit alpha from Solanum lycopersicum (Tomato).